The chain runs to 186 residues: Dynactin subunit 3 (186 aa).

The residue at position 2 (A2) is an N-acetylalanine.

This sequence belongs to the dynactin subunit 3 family. Subunit of dynactin, a multiprotein complex part of a tripartite complex with dynein and a adapter, such as BICDL1, BICD2 or HOOK3. The dynactin complex is built around ACTR1A/ACTB filament and consists of an actin-related filament composed of a shoulder domain, a pointed end and a barbed end. Its length is defined by its flexible shoulder domain. The soulder is composed of 2 DCTN1 subunits, 4 DCTN2 and 2 DCTN3. The 4 DCNT2 (via N-terminus) bind the ACTR1A filament and act as molecular rulers to determine the length. The pointed end is important for binding dynein-dynactin cargo adapters. Consists of 4 subunits: ACTR10, DCNT4, DCTN5 and DCTN6. The barbed end is composed of a CAPZA1:CAPZB heterodimers, which binds ACTR1A/ACTB filament and dynactin and stabilizes dynactin.

It is found in the cytoplasm. The protein localises to the cytoskeleton. It localises to the microtubule organizing center. Its subcellular location is the centrosome. The protein resides in the chromosome. It is found in the centromere. The protein localises to the kinetochore. It localises to the spindle. Its subcellular location is the cleavage furrow. The protein resides in the midbody. Its function is as follows. Part of the dynactin complex that activates the molecular motor dynein for ultra-processive transport along microtubules. Together with dynein is involved in spindle assembly and cytokinesis. This Sus scrofa (Pig) protein is Dynactin subunit 3.